Reading from the N-terminus, the 433-residue chain is ATP-dependent protease ATPase subunit HslU (433 aa).

Residues valine 18, 60 to 65 (GVGKTE), aspartate 246, glutamate 311, and arginine 383 each bind ATP.

The protein belongs to the ClpX chaperone family. HslU subfamily. A double ring-shaped homohexamer of HslV is capped on each side by a ring-shaped HslU homohexamer. The assembly of the HslU/HslV complex is dependent on binding of ATP.

Its subcellular location is the cytoplasm. In terms of biological role, ATPase subunit of a proteasome-like degradation complex; this subunit has chaperone activity. The binding of ATP and its subsequent hydrolysis by HslU are essential for unfolding of protein substrates subsequently hydrolyzed by HslV. HslU recognizes the N-terminal part of its protein substrates and unfolds these before they are guided to HslV for hydrolysis. The sequence is that of ATP-dependent protease ATPase subunit HslU from Nitrobacter hamburgensis (strain DSM 10229 / NCIMB 13809 / X14).